The chain runs to 125 residues: MEASRNRSLVGNNRSPEMNENDGEDVAASAAVEDVEVWDTLSNGFKRAQLYLDQNRDLIQRVNENHMSRIPDNVSRNVGLINEINGNISQVMEIYSDLSLNFAKKFDQRRRTTKDGDTTTTTTGS.

Polar residues predominate over residues 1-18 (MEASRNRSLVGNNRSPEM). Residues 1-28 (MEASRNRSLVGNNRSPEMNENDGEDVAA) form a disordered region.

The protein belongs to the EARLY FLOWERING 4 family. Homodimer.

The protein localises to the nucleus. In terms of biological role, component of the central CCA1/LHY-TOC1 feedback loop in the circadian clock that promotes clock accuracy and is required for sustained rhythms in the absence of daily light/dark cycles. In Arabidopsis thaliana (Mouse-ear cress), this protein is Protein ELF4-LIKE 1 (EFL1).